The primary structure comprises 224 residues: Pro-thyrotropin-releasing hormone-B (224 aa).

The signal sequence occupies residues 1-15; the sequence is MMFLWWLLLLGTAIS. Pyrrolidone carboxylic acid is present on Gln75. Proline amide is present on Pro77. Residues 86-101 show a composition bias toward basic and acidic residues; that stretch reads EKRQHPGKRDLEDLQL. 2 disordered regions span residues 86–131 and 150–212; these read EKRQ…DWSR and RQHP…NSGN. Pyrrolidone carboxylic acid is present on Gln89. Pro91 bears the Proline amide mark. At Gln105 the chain carries Pyrrolidone carboxylic acid. Pro107 is modified (proline amide). Over residues 110 to 129 the composition is skewed to basic and acidic residues; that stretch reads RYLEDMEKRQHPGKREEGDW. Residue Gln119 is modified to Pyrrolidone carboxylic acid. Pro121 is modified (proline amide). Gln151 carries the pyrrolidone carboxylic acid modification. Residue Pro153 is modified to Proline amide. At Gln166 the chain carries Pyrrolidone carboxylic acid. Pro168 carries the proline amide modification. The span at 182-199 shows a compositional bias: basic and acidic residues; the sequence is ENSKEVGKRQHPGKRYDP. Gln191 carries the post-translational modification Pyrrolidone carboxylic acid. Pro193 is modified (proline amide).

It belongs to the TRH family.

The protein resides in the secreted. In Xenopus laevis (African clawed frog), this protein is Pro-thyrotropin-releasing hormone-B (trh-b).